The chain runs to 488 residues: Glutamyl-tRNA(Gln) amidotransferase subunit B, mitochondrial (488 aa).

Belongs to the GatB/GatE family. GatB subfamily. Subunit of the heterotrimeric GatFAB amidotransferase (AdT) complex, composed of A, B and F subunits.

It localises to the mitochondrion. The catalysed reaction is L-glutamyl-tRNA(Gln) + L-glutamine + ATP + H2O = L-glutaminyl-tRNA(Gln) + L-glutamate + ADP + phosphate + H(+). Allows the formation of correctly charged Gln-tRNA(Gln) through the transamidation of misacylated Glu-tRNA(Gln) in the mitochondria. The reaction takes place in the presence of glutamine and ATP through an activated gamma-phospho-Glu-tRNA(Gln). The chain is Glutamyl-tRNA(Gln) amidotransferase subunit B, mitochondrial from Candida albicans (strain SC5314 / ATCC MYA-2876) (Yeast).